Here is a 653-residue protein sequence, read N- to C-terminus: Threonine--tRNA ligase (653 aa).

The TGS domain occupies 1 to 61; that stretch reads MIKITFPDGN…NEDAEVKLFK (61 aa). Residues 243-542 form a catalytic region; the sequence is DHRKIGKELE…LIEHTAGKFP (300 aa). Residues C338, H389, and H519 each contribute to the Zn(2+) site.

It belongs to the class-II aminoacyl-tRNA synthetase family. As to quaternary structure, homodimer. Zn(2+) is required as a cofactor.

It is found in the cytoplasm. It carries out the reaction tRNA(Thr) + L-threonine + ATP = L-threonyl-tRNA(Thr) + AMP + diphosphate + H(+). Catalyzes the attachment of threonine to tRNA(Thr) in a two-step reaction: L-threonine is first activated by ATP to form Thr-AMP and then transferred to the acceptor end of tRNA(Thr). Also edits incorrectly charged L-seryl-tRNA(Thr). This chain is Threonine--tRNA ligase, found in Porphyromonas gingivalis (strain ATCC BAA-308 / W83).